The sequence spans 126 residues: S-adenosylmethionine decarboxylase proenzyme (126 aa).

The active-site Schiff-base intermediate with substrate; via pyruvic acid is the S63. S63 is subject to Pyruvic acid (Ser); by autocatalysis. The active-site Proton acceptor; for processing activity is H68. C83 (proton donor; for catalytic activity) is an active-site residue.

This sequence belongs to the prokaryotic AdoMetDC family. Type 1 subfamily. As to quaternary structure, heterotetramer of two alpha and two beta chains arranged as a dimer of alpha/beta heterodimers. The cofactor is pyruvate. Post-translationally, is synthesized initially as an inactive proenzyme. Formation of the active enzyme involves a self-maturation process in which the active site pyruvoyl group is generated from an internal serine residue via an autocatalytic post-translational modification. Two non-identical subunits are generated from the proenzyme in this reaction, and the pyruvate is formed at the N-terminus of the alpha chain, which is derived from the carboxyl end of the proenzyme. The post-translation cleavage follows an unusual pathway, termed non-hydrolytic serinolysis, in which the side chain hydroxyl group of the serine supplies its oxygen atom to form the C-terminus of the beta chain, while the remainder of the serine residue undergoes an oxidative deamination to produce ammonia and the pyruvoyl group blocking the N-terminus of the alpha chain.

It carries out the reaction S-adenosyl-L-methionine + H(+) = S-adenosyl 3-(methylsulfanyl)propylamine + CO2. Its pathway is amine and polyamine biosynthesis; S-adenosylmethioninamine biosynthesis; S-adenosylmethioninamine from S-adenosyl-L-methionine: step 1/1. Functionally, catalyzes the decarboxylation of S-adenosylmethionine to S-adenosylmethioninamine (dcAdoMet), the propylamine donor required for the synthesis of the polyamines spermine and spermidine from the diamine putrescine. The polypeptide is S-adenosylmethionine decarboxylase proenzyme (Clostridium kluyveri (strain NBRC 12016)).